We begin with the raw amino-acid sequence, 65 residues long: UPF0434 protein Mmwyl1_2153 (65 aa).

This sequence belongs to the UPF0434 family.

The sequence is that of UPF0434 protein Mmwyl1_2153 from Marinomonas sp. (strain MWYL1).